The chain runs to 720 residues: Biotin biosynthesis bifunctional protein BioWF (720 aa).

Residues 1–39 (MRFSIKMRASARVSSSPSTSDGSSGDHTESRDRADRHIS) form a disordered region. Residues 8–23 (RASARVSSSPSTSDGS) show a composition bias toward low complexity. Basic and acidic residues predominate over residues 24-39 (SGDHTESRDRADRHIS). A substrate-binding site is contributed by Arg-314. 401 to 402 (GY) lines the pyridoxal 5'-phosphate pocket. Residue His-439 participates in substrate binding. Residues Ser-488, 513–516 (DDAH), and 564–567 (TASK) each bind pyridoxal 5'-phosphate. At Lys-567 the chain carries N6-(pyridoxal phosphate)lysine. Position 684 (Thr-684) interacts with substrate.

It in the N-terminal section; belongs to the BioW family. The protein in the C-terminal section; belongs to the class-II pyridoxal-phosphate-dependent aminotransferase family. BioF subfamily. Homodimer. Mg(2+) is required as a cofactor. Pyridoxal 5'-phosphate serves as cofactor.

It carries out the reaction heptanedioate + ATP + CoA = 6-carboxyhexanoyl-CoA + AMP + diphosphate. It catalyses the reaction 6-carboxyhexanoyl-[ACP] + L-alanine + H(+) = (8S)-8-amino-7-oxononanoate + holo-[ACP] + CO2. It functions in the pathway metabolic intermediate metabolism; pimeloyl-CoA biosynthesis; pimeloyl-CoA from pimelate: step 1/1. Its pathway is cofactor biosynthesis; biotin biosynthesis. Its function is as follows. Catalyzes both the decarboxylative condensation of pimeloyl-[acyl-carrier protein] and L-alanine to produce 8-amino-7-oxononanoate (AON), [acyl-carrier protein], and carbon dioxide, and the transformation of pimelate into pimeloyl-CoA with concomitant hydrolysis of ATP to AMP. This is Biotin biosynthesis bifunctional protein BioWF (bioWF) from Corynebacterium kroppenstedtii (strain DSM 44385 / JCM 11950 / CIP 105744 / CCUG 35717).